We begin with the raw amino-acid sequence, 445 residues long: Exodeoxyribonuclease 7 large subunit (445 aa).

This sequence belongs to the XseA family. Heterooligomer composed of large and small subunits.

The protein resides in the cytoplasm. The catalysed reaction is Exonucleolytic cleavage in either 5'- to 3'- or 3'- to 5'-direction to yield nucleoside 5'-phosphates.. In terms of biological role, bidirectionally degrades single-stranded DNA into large acid-insoluble oligonucleotides, which are then degraded further into small acid-soluble oligonucleotides. The polypeptide is Exodeoxyribonuclease 7 large subunit (Staphylococcus aureus (strain USA300 / TCH1516)).